A 490-amino-acid chain; its full sequence is Cyclin-A2-1 (490 aa).

Residues 34-76 (FAPSVSLPARTERKQTAKGKTKRGALDEITSASTATSAPQPKR) form a disordered region. Residues 63 to 72 (TSASTATSAP) are compositionally biased toward polar residues.

This sequence belongs to the cyclin family. Cyclin AB subfamily.

In Oryza sativa subsp. japonica (Rice), this protein is Cyclin-A2-1 (CYCA2-1).